The following is a 221-amino-acid chain: Ribosomal RNA small subunit methyltransferase Nep1 (221 aa).

S-adenosyl-L-methionine contacts are provided by residues G174, G179, and 196–201 (IGDETM).

This sequence belongs to the class IV-like SAM-binding methyltransferase superfamily. RNA methyltransferase NEP1 family. Homodimer.

The enzyme catalyses a pseudouridine in rRNA + S-adenosyl-L-methionine = an N(1)-methylpseudouridine in rRNA + S-adenosyl-L-homocysteine + H(+). Functionally, methyltransferase involved in ribosomal biogenesis. Specifically catalyzes the N1-methylation of the pseudouridine corresponding to position 914 in M.jannaschii 16S rRNA. This is Ribosomal RNA small subunit methyltransferase Nep1 from Pyrobaculum islandicum (strain DSM 4184 / JCM 9189 / GEO3).